A 214-amino-acid chain; its full sequence is Pyridoxine/pyridoxamine 5'-phosphate oxidase (214 aa).

Substrate-binding positions include 8–11 and Lys-67; that span reads RKSY. FMN-binding positions include 62–67, 77–78, Lys-84, and Gln-106; these read RVVLLK and YT. Positions 124, 128, and 132 each coordinate substrate. FMN is bound by residues 141-142 and Trp-186; that span reads QS. Residue 192-194 participates in substrate binding; the sequence is RLH. Arg-196 is a binding site for FMN.

Belongs to the pyridoxamine 5'-phosphate oxidase family. As to quaternary structure, homodimer. It depends on FMN as a cofactor.

The catalysed reaction is pyridoxamine 5'-phosphate + O2 + H2O = pyridoxal 5'-phosphate + H2O2 + NH4(+). The enzyme catalyses pyridoxine 5'-phosphate + O2 = pyridoxal 5'-phosphate + H2O2. It functions in the pathway cofactor metabolism; pyridoxal 5'-phosphate salvage; pyridoxal 5'-phosphate from pyridoxamine 5'-phosphate: step 1/1. Its pathway is cofactor metabolism; pyridoxal 5'-phosphate salvage; pyridoxal 5'-phosphate from pyridoxine 5'-phosphate: step 1/1. In terms of biological role, catalyzes the oxidation of either pyridoxine 5'-phosphate (PNP) or pyridoxamine 5'-phosphate (PMP) into pyridoxal 5'-phosphate (PLP). The chain is Pyridoxine/pyridoxamine 5'-phosphate oxidase from Flavobacterium johnsoniae (strain ATCC 17061 / DSM 2064 / JCM 8514 / BCRC 14874 / CCUG 350202 / NBRC 14942 / NCIMB 11054 / UW101) (Cytophaga johnsonae).